The following is a 403-amino-acid chain: 4-hydroxyphenylpyruvate dioxygenase (403 aa).

VOC domains lie at 25–169 (GYDH…LVER) and 201–359 (RIDH…LFTK). His204, His287, and Glu370 together coordinate Fe cation.

This sequence belongs to the 4HPPD family. As to quaternary structure, homodimer. Requires Fe cation as cofactor.

The catalysed reaction is 3-(4-hydroxyphenyl)pyruvate + O2 = homogentisate + CO2. It participates in amino-acid degradation; L-phenylalanine degradation; acetoacetate and fumarate from L-phenylalanine: step 3/6. In terms of biological role, 4-hydroxyphenylpyruvate dioxygenase; part of the L-tyrosine degradation gene cluster that mediates the biosynthesis of the brownish pigment pyomelanin as an alternative melanin. The 4-hydroxyphenylpyruvate dioxygenase hppD catalyzes the conversion of 4-hydroxyphenylpyruvate to homogentisic acid (HGA). The protein hmgX is crucial for this conversion and thus, probably functions as an accessory factor to mediate specific activity of hppD. The homogentisate 1,2-dioxygenase hmgA is then involved in the cleavage of the aromatic ring of HGA and its conversion to 4-maleylacetoacetate. When hmgA activity is lowered by the cell wall integrity (CWI) signaling pathway, HGA accumulates and leads to the production of pyomelanin through benzoquinone acetic acid after oxidation and polymerization. On the opposite, in non-stress conditions, both hppD and hmgA activities are balanced and HGA is degraded into 4-maleylacetoacetate. 4-maleylacetoacetate is further converted to 4-fumarylacetoacetate by the maleylacetoacetate isomerase maiA, which is degraded into fumarate and acetoacetate by the fumarylacetoacetase fahA. This Aspergillus fumigatus (strain ATCC MYA-4609 / CBS 101355 / FGSC A1100 / Af293) (Neosartorya fumigata) protein is 4-hydroxyphenylpyruvate dioxygenase.